The chain runs to 410 residues: Peptidase T (410 aa).

His-79 provides a ligand contact to Zn(2+). Asp-81 is a catalytic residue. Asp-142 contacts Zn(2+). Glu-176 (proton acceptor) is an active-site residue. Positions 177, 199, and 381 each coordinate Zn(2+).

The protein belongs to the peptidase M20B family. Requires Zn(2+) as cofactor.

The protein resides in the cytoplasm. The enzyme catalyses Release of the N-terminal residue from a tripeptide.. In terms of biological role, cleaves the N-terminal amino acid of tripeptides. The polypeptide is Peptidase T (Bacillus thuringiensis subsp. konkukian (strain 97-27)).